A 334-amino-acid chain; its full sequence is MKPPPRRRAAPARYLGEVTGPATWSAREKRQLVRLLQARQGQPEPDATELARELRGRSEAEIRVFLQQLKGRVAREAIQKVHPGGLQGPRRREAQPPAPIEVWTDLAEKITGPLEEALAVAFSQVLTIAATEPVTLLHSKPPKPTQARGKPLLLSAPGGQEDPAPEIPSSAPAAPSSAPRTPDPAPEKPSESSAGPSTEEDFAVDFEKIYKYLSSVSRSGRSPELSAAESAVVLDLLMSLPEELPLLPCTALVEHMTETYLRLTAPQPIPAGGSLGPAAEGDGAGSKAPEETPPATEKAEHSELKSPWQAAGICPLNPFLVPLELLGRAATPAR.

Disordered regions lie at residues 137 to 200 and 271 to 306; these read LHSK…STEE and AGGS…ELKS. A compositionally biased stretch (low complexity) spans 167–180; that stretch reads IPSSAPAAPSSAPR.

Part of the SNAPc complex composed of 5 subunits: SNAPC1, SNAPC2, SNAPC3, SNAPC4 and SNAPC5. SNAPC2 interacts with TBP and SNAPC4.

The protein localises to the nucleus. Part of the SNAPc complex required for the transcription of both RNA polymerase II and III small-nuclear RNA genes. Binds to the proximal sequence element (PSE), a non-TATA-box basal promoter element common to these 2 types of genes. Recruits TBP and BRF2 to the U6 snRNA TATA box. This Homo sapiens (Human) protein is snRNA-activating protein complex subunit 2 (SNAPC2).